A 462-amino-acid polypeptide reads, in one-letter code: L-seryl-tRNA(Sec) selenium transferase (462 aa).

Position 295 is an N6-(pyridoxal phosphate)lysine (Lys-295).

Belongs to the SelA family. Homodecamer; pentamer of dimers. Binds only one seryl-tRNA(Sec) per dimer. Requires pyridoxal 5'-phosphate as cofactor.

The protein localises to the cytoplasm. It carries out the reaction L-seryl-tRNA(Sec) + selenophosphate + H(+) = L-selenocysteinyl-tRNA(Sec) + phosphate. Its pathway is aminoacyl-tRNA biosynthesis; selenocysteinyl-tRNA(Sec) biosynthesis; selenocysteinyl-tRNA(Sec) from L-seryl-tRNA(Sec) (bacterial route): step 1/1. Converts seryl-tRNA(Sec) to selenocysteinyl-tRNA(Sec) required for selenoprotein biosynthesis. The protein is L-seryl-tRNA(Sec) selenium transferase of Klebsiella pneumoniae subsp. pneumoniae (strain ATCC 700721 / MGH 78578).